The sequence spans 296 residues: D-alanine--D-alanine ligase (296 aa).

The 191-residue stretch at 103–293 (KEILMHHRMP…FDSFVKRIIE (191 aa)) folds into the ATP-grasp domain. An ATP-binding site is contributed by 129-180 (ISFPAAVKPSSGGSSIATFKVKSIQELKHAYEEASKYGEVMIEQWVTGKEIT). Mg(2+) is bound by residues Asp247, Glu260, and Asn262.

This sequence belongs to the D-alanine--D-alanine ligase family. Mg(2+) is required as a cofactor. It depends on Mn(2+) as a cofactor.

It is found in the cytoplasm. The catalysed reaction is 2 D-alanine + ATP = D-alanyl-D-alanine + ADP + phosphate + H(+). The protein operates within cell wall biogenesis; peptidoglycan biosynthesis. Functionally, cell wall formation. The sequence is that of D-alanine--D-alanine ligase from Francisella tularensis subsp. holarctica (strain LVS).